The following is a 122-amino-acid chain: Small ribosomal subunit protein uS13 (122 aa).

Residues Arg99–Lys122 form a disordered region.

This sequence belongs to the universal ribosomal protein uS13 family. As to quaternary structure, part of the 30S ribosomal subunit. Forms a loose heterodimer with protein S19. Forms two bridges to the 50S subunit in the 70S ribosome.

In terms of biological role, located at the top of the head of the 30S subunit, it contacts several helices of the 16S rRNA. In the 70S ribosome it contacts the 23S rRNA (bridge B1a) and protein L5 of the 50S subunit (bridge B1b), connecting the 2 subunits; these bridges are implicated in subunit movement. Contacts the tRNAs in the A and P-sites. This is Small ribosomal subunit protein uS13 from Sinorhizobium fredii (strain NBRC 101917 / NGR234).